Consider the following 183-residue polypeptide: Glutathione-regulated potassium-efflux system ancillary protein KefG (183 aa).

This sequence belongs to the NAD(P)H dehydrogenase (quinone) family. KefG subfamily. As to quaternary structure, interacts with KefB.

The protein resides in the cell inner membrane. The enzyme catalyses a quinone + NADH + H(+) = a quinol + NAD(+). It carries out the reaction a quinone + NADPH + H(+) = a quinol + NADP(+). Its function is as follows. Regulatory subunit of a potassium efflux system that confers protection against electrophiles. Required for full activity of KefB. The polypeptide is Glutathione-regulated potassium-efflux system ancillary protein KefG (Serratia proteamaculans (strain 568)).